A 200-amino-acid chain; its full sequence is dTTP/UTP pyrophosphatase (200 aa).

Aspartate 80 functions as the Proton acceptor in the catalytic mechanism.

This sequence belongs to the Maf family. YhdE subfamily. A divalent metal cation is required as a cofactor.

The protein resides in the cytoplasm. It carries out the reaction dTTP + H2O = dTMP + diphosphate + H(+). The catalysed reaction is UTP + H2O = UMP + diphosphate + H(+). Functionally, nucleoside triphosphate pyrophosphatase that hydrolyzes dTTP and UTP. May have a dual role in cell division arrest and in preventing the incorporation of modified nucleotides into cellular nucleic acids. The polypeptide is dTTP/UTP pyrophosphatase (Pasteurella multocida (strain Pm70)).